Here is a 111-residue protein sequence, read N- to C-terminus: Small ribosomal subunit protein bS16 (111 aa).

Belongs to the bacterial ribosomal protein bS16 family.

The chain is Small ribosomal subunit protein bS16 from Rickettsia africae (strain ESF-5).